We begin with the raw amino-acid sequence, 151 residues long: 3-dehydroquinate dehydratase (151 aa).

The active-site Proton acceptor is tyrosine 26. Substrate contacts are provided by asparagine 77, histidine 83, and aspartate 90. The active-site Proton donor is histidine 103. Substrate-binding positions include 104-105 (LS) and arginine 114.

Belongs to the type-II 3-dehydroquinase family. Homododecamer.

The catalysed reaction is 3-dehydroquinate = 3-dehydroshikimate + H2O. Its pathway is metabolic intermediate biosynthesis; chorismate biosynthesis; chorismate from D-erythrose 4-phosphate and phosphoenolpyruvate: step 3/7. In terms of biological role, catalyzes a trans-dehydration via an enolate intermediate. This Pelodictyon phaeoclathratiforme (strain DSM 5477 / BU-1) protein is 3-dehydroquinate dehydratase.